The sequence spans 207 residues: Proteasome subunit beta 2 (207 aa).

The propeptide at 1-10 (MLQLTEKFKG) is removed in mature form; by autocatalysis. Thr11 functions as the Nucleophile in the catalytic mechanism.

Belongs to the peptidase T1B family. In terms of assembly, the 20S proteasome core is composed of 14 alpha and 14 beta subunits that assemble into four stacked heptameric rings, resulting in a barrel-shaped structure. The two inner rings, each composed of seven catalytic beta subunits, are sandwiched by two outer rings, each composed of seven alpha subunits. The catalytic chamber with the active sites is on the inside of the barrel. Has a gated structure, the ends of the cylinder being occluded by the N-termini of the alpha-subunits. Is capped at one or both ends by the proteasome regulatory ATPase, PAN.

It localises to the cytoplasm. It catalyses the reaction Cleavage of peptide bonds with very broad specificity.. With respect to regulation, the formation of the proteasomal ATPase PAN-20S proteasome complex, via the docking of the C-termini of PAN into the intersubunit pockets in the alpha-rings, triggers opening of the gate for substrate entry. Interconversion between the open-gate and close-gate conformations leads to a dynamic regulation of the 20S proteasome proteolysis activity. In terms of biological role, component of the proteasome core, a large protease complex with broad specificity involved in protein degradation. The polypeptide is Proteasome subunit beta 2 (Pyrococcus abyssi (strain GE5 / Orsay)).